The chain runs to 116 residues: Somatostatin (116 aa).

An N-terminal signal peptide occupies residues 1–24 (MLSCRLQCALALLSIALAVGTVSA). A propeptide spanning residues 25–88 (APSDPRLRQF…QDEVRLELER (64 aa)) is cleaved from the precursor. The tract at residues 60–82 (PSQTENEALESEDLSRGAEQDEV) is disordered. The segment covering 72 to 82 (DLSRGAEQDEV) has biased composition (basic and acidic residues). Cys-105 and Cys-116 are joined by a disulfide.

This sequence belongs to the somatostatin family.

The protein localises to the secreted. Somatostatin inhibits the release of somatotropin. The sequence is that of Somatostatin (SST) from Gallus gallus (Chicken).